A 158-amino-acid polypeptide reads, in one-letter code: MSASEAQVIARALFDSLTGAALQALHTATSINGEVTTERLLAALPADAPREVRNLILALGKEGNLDRLPAVVAAFEQMTRRGGARPLTGEVTSAVELSPQQRERITEQLKARYGPDLEVRFSVDESLIGGLIIRIGDQVLDTSLRTRMAAIQRNMMTG.

It belongs to the ATPase delta chain family. As to quaternary structure, F-type ATPases have 2 components, F(1) - the catalytic core - and F(0) - the membrane proton channel. F(1) has five subunits: alpha(3), beta(3), gamma(1), delta(1), epsilon(1). F(0) has three main subunits: a(1), b(2) and c(10-14). The alpha and beta chains form an alternating ring which encloses part of the gamma chain. F(1) is attached to F(0) by a central stalk formed by the gamma and epsilon chains, while a peripheral stalk is formed by the delta and b chains.

It localises to the cell membrane. Functionally, f(1)F(0) ATP synthase produces ATP from ADP in the presence of a proton or sodium gradient. F-type ATPases consist of two structural domains, F(1) containing the extramembraneous catalytic core and F(0) containing the membrane proton channel, linked together by a central stalk and a peripheral stalk. During catalysis, ATP synthesis in the catalytic domain of F(1) is coupled via a rotary mechanism of the central stalk subunits to proton translocation. In terms of biological role, this protein is part of the stalk that links CF(0) to CF(1). It either transmits conformational changes from CF(0) to CF(1) or is implicated in proton conduction. This chain is ATP synthase subunit delta, found in Roseiflexus castenholzii (strain DSM 13941 / HLO8).